A 182-amino-acid chain; its full sequence is Ribosome maturation factor RimM (182 aa).

The region spanning 103 to 182 (GDDYYWKDLM…VIEADWDPGF (80 aa)) is the PRC barrel domain.

The protein belongs to the RimM family. In terms of assembly, binds ribosomal protein uS19.

The protein resides in the cytoplasm. In terms of biological role, an accessory protein needed during the final step in the assembly of 30S ribosomal subunit, possibly for assembly of the head region. Essential for efficient processing of 16S rRNA. May be needed both before and after RbfA during the maturation of 16S rRNA. It has affinity for free ribosomal 30S subunits but not for 70S ribosomes. This Serratia proteamaculans (strain 568) protein is Ribosome maturation factor RimM.